Consider the following 294-residue polypeptide: Protease HtpX homolog 2 (294 aa).

Helical transmembrane passes span 15–35 (MLFT…FLSY) and 36–56 (YGTS…AQYF). His140 is a binding site for Zn(2+). Glu141 is a catalytic residue. Zn(2+) is bound at residue His144. Helical transmembrane passes span 151-171 (AVLT…RYSL) and 185-205 (GGIM…FLLI). Glu213 is a binding site for Zn(2+).

The protein belongs to the peptidase M48B family. Zn(2+) is required as a cofactor.

Its subcellular location is the cell membrane. The sequence is that of Protease HtpX homolog 2 from Methanosarcina mazei (strain ATCC BAA-159 / DSM 3647 / Goe1 / Go1 / JCM 11833 / OCM 88) (Methanosarcina frisia).